Reading from the N-terminus, the 77-residue chain is Small VCP/p97-interacting protein (77 aa).

2 disordered regions span residues methionine 1 to glutamate 20 and leucine 25 to serine 77. Glycine 2 is lipidated: N-myristoyl glycine. S-palmitoyl cysteine attachment occurs at residues cysteine 4 and cysteine 7. A VCP/p97-interacting motif (VIM) region spans residues lysine 21–glutamine 33. The segment covering leucine 25–alanine 37 has biased composition (basic and acidic residues). At serine 46 the chain carries Phosphoserine.

It belongs to the SVIP family. In terms of assembly, interacts (via VIM motif) with VCP/p97. Forms a complex with VCP/p97 and DERL1.

It localises to the membrane. Its subcellular location is the smooth endoplasmic reticulum membrane. The protein resides in the golgi apparatus membrane. It is found in the cell membrane. The protein localises to the lysosome membrane. Functionally, negative regulator of the ER-associated degradation pathway (ERAD) of misfolded proteins. It competes with AMFR/gp78 for binding VCP/p97, and inhibits AMFR/gp78-VCP/p97 complex formation that is required for degradation of ERAD substrates. Involved in the regulation of adrenal cortisol and dehydroepiandrosterone (DHEA) biosynthesis. This Homo sapiens (Human) protein is Small VCP/p97-interacting protein (SVIP).